Consider the following 351-residue polypeptide: Protein RecA (351 aa).

68–75 contributes to the ATP binding site; sequence GPESSGKT.

It belongs to the RecA family.

The protein localises to the cytoplasm. Functionally, can catalyze the hydrolysis of ATP in the presence of single-stranded DNA, the ATP-dependent uptake of single-stranded DNA by duplex DNA, and the ATP-dependent hybridization of homologous single-stranded DNAs. It interacts with LexA causing its activation and leading to its autocatalytic cleavage. The polypeptide is Protein RecA (Thermotoga neapolitana (strain ATCC 49049 / DSM 4359 / NBRC 107923 / NS-E)).